Consider the following 64-residue polypeptide: MLPLDSMERRHLKCPLCSGEKFRAEEGKLDSKWGFTAHKVRIAICENCGYVMMFYKGRTIWDFD.

To P.abyssi PAB3148.

This is an uncharacterized protein from Archaeoglobus fulgidus (strain ATCC 49558 / DSM 4304 / JCM 9628 / NBRC 100126 / VC-16).